A 67-amino-acid chain; its full sequence is Beta-defensin 14 (67 aa).

Positions 1–22 (MRLHYLLFVFLILFLVPAPGDA) are cleaved as a signal peptide. 3 disulfide bridges follow: cysteine 33–cysteine 62, cysteine 40–cysteine 55, and cysteine 45–cysteine 63.

The protein belongs to the beta-defensin family.

Its subcellular location is the secreted. Has antibacterial activity. This Mus musculus (Mouse) protein is Beta-defensin 14 (Defb14).